A 66-amino-acid polypeptide reads, in one-letter code: Large ribosomal subunit protein bL33c (66 aa).

Belongs to the bacterial ribosomal protein bL33 family.

The protein localises to the plastid. The protein resides in the chloroplast. In Angiopteris evecta (Mule's foot fern), this protein is Large ribosomal subunit protein bL33c.